The sequence spans 114 residues: Chaperone protein YscY (114 aa).

In terms of assembly, binds to YscX.

It localises to the cytoplasm. In terms of biological role, required for Yop secretion. Functions probably as a chaperone which stabilizes YscX within the cell, before its secretion. This Yersinia enterocolitica serotype O:8 / biotype 1B (strain NCTC 13174 / 8081) protein is Chaperone protein YscY (yscY).